An 83-amino-acid chain; its full sequence is Putative defensin-like protein 257 (83 aa).

The N-terminal stretch at 1-25 is a signal peptide; sequence MMNVSLKLSFLVFILVIMSNLGSEA. Cystine bridges form between cysteine 57/cysteine 73, cysteine 63/cysteine 80, and cysteine 67/cysteine 82.

It belongs to the DEFL family.

The protein localises to the secreted. This is Putative defensin-like protein 257 from Arabidopsis thaliana (Mouse-ear cress).